Reading from the N-terminus, the 205-residue chain is Octanoyltransferase (205 aa).

The BPL/LPL catalytic domain maps to 30–205; that stretch reads NLSDELVWLL…ILKQEFHKIF (176 aa). Residues 68–75, 140–142, and 153–155 contribute to the substrate site; these read RGGKYTYH, AFG, and GIA. Cys-171 serves as the catalytic Acyl-thioester intermediate.

Belongs to the LipB family.

It localises to the cytoplasm. It catalyses the reaction octanoyl-[ACP] + L-lysyl-[protein] = N(6)-octanoyl-L-lysyl-[protein] + holo-[ACP] + H(+). The protein operates within protein modification; protein lipoylation via endogenous pathway; protein N(6)-(lipoyl)lysine from octanoyl-[acyl-carrier-protein]: step 1/2. Its function is as follows. Catalyzes the transfer of endogenously produced octanoic acid from octanoyl-acyl-carrier-protein onto the lipoyl domains of lipoate-dependent enzymes. Lipoyl-ACP can also act as a substrate although octanoyl-ACP is likely to be the physiological substrate. In Wolbachia pipientis subsp. Culex pipiens (strain wPip), this protein is Octanoyltransferase.